The chain runs to 93 residues: UPF0250 protein PA3998 (93 aa).

The protein belongs to the UPF0250 family.

This chain is UPF0250 protein PA3998, found in Pseudomonas aeruginosa (strain ATCC 15692 / DSM 22644 / CIP 104116 / JCM 14847 / LMG 12228 / 1C / PRS 101 / PAO1).